The chain runs to 130 residues: Small ribosomal subunit protein uS9 (130 aa).

Belongs to the universal ribosomal protein uS9 family.

The polypeptide is Small ribosomal subunit protein uS9 (Citrobacter koseri (strain ATCC BAA-895 / CDC 4225-83 / SGSC4696)).